We begin with the raw amino-acid sequence, 213 residues long: Large ribosomal subunit protein uL3 (213 aa).

Glutamine 151 carries the post-translational modification N5-methylglutamine.

The protein belongs to the universal ribosomal protein uL3 family. As to quaternary structure, part of the 50S ribosomal subunit. Forms a cluster with proteins L14 and L19. In terms of processing, methylated by PrmB.

In terms of biological role, one of the primary rRNA binding proteins, it binds directly near the 3'-end of the 23S rRNA, where it nucleates assembly of the 50S subunit. The sequence is that of Large ribosomal subunit protein uL3 from Rhizobium etli (strain CIAT 652).